The chain runs to 190 residues: Elongation factor P-like protein (190 aa).

Belongs to the elongation factor P family.

This is Elongation factor P-like protein from Marinomonas sp. (strain MWYL1).